The following is a 734-amino-acid chain: Photosystem I P700 chlorophyll a apoprotein A2 (734 aa).

8 helical membrane passes run 46–69, 135–158, 175–199, 273–291, 330–353, 369–395, 417–439, and 517–535; these read IFAS…FHVA, LYTG…LHLQ, LNHH…HVAI, IAHH…GHMY, IHFQ…QHMY, AALY…IFFI, AIIS…LYVH, and FLVH…LILV. [4Fe-4S] cluster contacts are provided by Cys-559 and Cys-568. Transmembrane regions (helical) follow at residues 575 to 596 and 643 to 665; these read AFYL…YWHW and LSVW…MFLI. 3 residues coordinate chlorophyll a: His-654, Met-662, and Tyr-670. Trp-671 lines the phylloquinone pocket. The helical transmembrane segment at 707–727 threads the bilayer; it reads LVGLAHFSVGYIFTYAAFLIA.

The protein belongs to the PsaA/PsaB family. In terms of assembly, the PsaA/B heterodimer binds the P700 chlorophyll special pair and subsequent electron acceptors. PSI consists of a core antenna complex that captures photons, and an electron transfer chain that converts photonic excitation into a charge separation. The eukaryotic PSI reaction center is composed of at least 11 subunits. P700 is a chlorophyll a/chlorophyll a' dimer, A0 is one or more chlorophyll a, A1 is one or both phylloquinones and FX is a shared 4Fe-4S iron-sulfur center. serves as cofactor.

It is found in the plastid. The protein resides in the chloroplast thylakoid membrane. The enzyme catalyses reduced [plastocyanin] + hnu + oxidized [2Fe-2S]-[ferredoxin] = oxidized [plastocyanin] + reduced [2Fe-2S]-[ferredoxin]. Its function is as follows. PsaA and PsaB bind P700, the primary electron donor of photosystem I (PSI), as well as the electron acceptors A0, A1 and FX. PSI is a plastocyanin-ferredoxin oxidoreductase, converting photonic excitation into a charge separation, which transfers an electron from the donor P700 chlorophyll pair to the spectroscopically characterized acceptors A0, A1, FX, FA and FB in turn. Oxidized P700 is reduced on the lumenal side of the thylakoid membrane by plastocyanin. The protein is Photosystem I P700 chlorophyll a apoprotein A2 of Eucalyptus globulus subsp. globulus (Tasmanian blue gum).